A 113-amino-acid polypeptide reads, in one-letter code: Pro-corazonin (113 aa).

Positions 1–19 (MATNITMFLIVITLTSVAA) are cleaved as a signal peptide. Position 20 is a pyrrolidone carboxylic acid (Gln20). Asn30 is modified (asparagine amide). The segment at 74 to 96 (LGPCDTSKTRSTTNPSDTNTSAV) is disordered. A compositionally biased stretch (polar residues) spans 82–96 (TRSTTNPSDTNTSAV).

It belongs to the corazonin family. As to expression, four pairs of lateral neurosecretory cells in the brains of late instar larvae, pupae and adults.

Its subcellular location is the secreted. Its function is as follows. Cardioactive peptide. Corazonin is probably involved in the physiological regulation of the heart beat. The sequence is that of Pro-corazonin from Galleria mellonella (Greater wax moth).